Consider the following 522-residue polypeptide: MEXLQGYLEKGRSRQQPLLYPLLFQEYIYALAHDRGLKGSLFYEPTEVFGYDSXSRLALVKRLIIXIYQQNFFLFGVNDSNKNRFVSHHHNNFCYSHFYSQVISQGFAILVEIPFSLRLXSYFEKKEIPXSHNLRSIHSIFPFLEDKLLHLNYVSDILIPHPIHMEILVQILQCWIQDVPLLHFLRFFLHKYHNWNSFLITPKKSIYVFSKENKRLFRFLYNSYVSECEFLLVFLRKQSSYLRLTSFGFFLERRHFYVKIERLRMQHLILIVVCRDFFQGTLWSFKDPFMXXXXXXXXXVLASXGTHLLXKKWXYNXXNLWQYYFHFWYQSYRIHMNQLSXYSFYFLGYLSSLLKNSSTVRNQMLENSFLIDTVTNKFETLVPVIFLIGSLSKAQFCTVSGHPISKPIWADLSDSEIIERFGRMCRNLSHYHSGSSKKQGLYRIKYILRLSCARTSAXTHXSTVRTFXRRLGSGLLEEFFTEEEQVLSLILPKTIPFTFYGSHKERIWYLDIIRINDLVNHS.

This sequence belongs to the intron maturase 2 family. MatK subfamily.

The protein localises to the plastid. It localises to the chloroplast. Functionally, usually encoded in the trnK tRNA gene intron. Probably assists in splicing its own and other chloroplast group II introns. This chain is Maturase K, found in Iris sanguinea (Japanese iris).